The following is a 138-amino-acid chain: Histone H2B.4 (138 aa).

Residues 1–39 (MAPKAAEKKPAEKKPAGKAPAEKLPKAEKKISKDAGGSE) are compositionally biased toward basic and acidic residues. The interval 1–48 (MAPKAAEKKPAEKKPAGKAPAEKLPKAEKKISKDAGGSEKKKKKSKKS) is disordered. A2 is modified (n,N,N-trimethylalanine; alternate). Residue A2 is modified to N,N-dimethylalanine; alternate. Position 2 is an N-methylalanine; alternate (A2). At K4 the chain carries N6-methyllysine. N6-acetyllysine is present on residues K8 and K13. K14 is subject to N6,N6-dimethyllysine. N6-acetyllysine occurs at positions 18, 23, 29, and 30. Residue K135 forms a Glycyl lysine isopeptide (Lys-Gly) (interchain with G-Cter in ubiquitin) linkage.

It belongs to the histone H2B family. In terms of assembly, the nucleosome is a histone octamer containing two molecules each of H2A, H2B, H3 and H4 assembled in one H3-H4 heterotetramer and two H2A-H2B heterodimers. The octamer wraps approximately 147 bp of DNA. In terms of processing, can be acetylated to form H2BK6ac, H2BK33ac and H2BK34ac. Monoubiquitinated by BRE1 to form H2BK143ub1 and deubiquitinated by UBP26. Required for heterochromatic histone H3 di- and trimethylation at H3K4me. May give a specific tag for epigenetic transcriptional activation.

It is found in the nucleus. The protein localises to the chromosome. Its function is as follows. Core component of nucleosome. Nucleosomes wrap and compact DNA into chromatin, limiting DNA accessibility to the cellular machineries which require DNA as a template. Histones thereby play a central role in transcription regulation, DNA repair, DNA replication and chromosomal stability. DNA accessibility is regulated via a complex set of post-translational modifications of histones, also called histone code, and nucleosome remodeling. This is Histone H2B.4 from Arabidopsis thaliana (Mouse-ear cress).